Consider the following 145-residue polypeptide: Small ribosomal subunit protein uS12 (145 aa).

P64 is modified (hydroxyproline).

This sequence belongs to the universal ribosomal protein uS12 family.

This Aspergillus fumigatus (strain ATCC MYA-4609 / CBS 101355 / FGSC A1100 / Af293) (Neosartorya fumigata) protein is Small ribosomal subunit protein uS12 (rps23).